The primary structure comprises 288 residues: Pyridoxal kinase PdxY (288 aa).

Residues serine 12 and 47–48 (TQ) each bind substrate. Residues aspartate 114, glutamate 151, lysine 184, and 211 to 214 (RPLL) contribute to the ATP site. Aspartate 225 is a substrate binding site.

The protein belongs to the pyridoxine kinase family. PdxY subfamily. In terms of assembly, homodimer. The cofactor is Mg(2+).

The enzyme catalyses pyridoxal + ATP = pyridoxal 5'-phosphate + ADP + H(+). It functions in the pathway cofactor metabolism; pyridoxal 5'-phosphate salvage; pyridoxal 5'-phosphate from pyridoxal: step 1/1. Functionally, pyridoxal kinase involved in the salvage pathway of pyridoxal 5'-phosphate (PLP). Catalyzes the phosphorylation of pyridoxal to PLP. The polypeptide is Pyridoxal kinase PdxY (Pseudomonas syringae pv. syringae (strain B728a)).